A 293-amino-acid chain; its full sequence is MPWIQLKLNTTGANAEDLSDALMEAGAVSITFQDTHDTPVFEPLPGETRLWGDTDVIGLFDAETDMNDVVAILENHPMLGAGFAHKIEQLEDKDWEREWMDNFHPMRFGERLWICPSWRDVPDENAVNVMLDPGLAFGTGTHPTTSLCLQWLDSLDLTGKTVIDFGCGSGILAIAALKLGAAKAIGIDIDPQAIQASRDNAERNGVSDRLELYLPKDQPEEMKADVVVANILAGPLRELAPLISVLPVSGGLLGLSGILASQAESVCEAYADSFALDPVVEKEEWCRITGRKN.

4 residues coordinate S-adenosyl-L-methionine: Thr145, Gly166, Asp188, and Asn230.

The protein belongs to the methyltransferase superfamily. PrmA family.

It is found in the cytoplasm. The enzyme catalyses L-lysyl-[protein] + 3 S-adenosyl-L-methionine = N(6),N(6),N(6)-trimethyl-L-lysyl-[protein] + 3 S-adenosyl-L-homocysteine + 3 H(+). Its function is as follows. Methylates ribosomal protein L11. The polypeptide is Ribosomal protein L11 methyltransferase (Escherichia coli O81 (strain ED1a)).